The chain runs to 236 residues: Biosynthetic peptidoglycan transglycosylase (236 aa).

Residues 12–31 (ALLWFAAGSALVVLVLRWVP) form a helical membrane-spanning segment.

It belongs to the glycosyltransferase 51 family.

It localises to the cell inner membrane. It carries out the reaction [GlcNAc-(1-&gt;4)-Mur2Ac(oyl-L-Ala-gamma-D-Glu-L-Lys-D-Ala-D-Ala)](n)-di-trans,octa-cis-undecaprenyl diphosphate + beta-D-GlcNAc-(1-&gt;4)-Mur2Ac(oyl-L-Ala-gamma-D-Glu-L-Lys-D-Ala-D-Ala)-di-trans,octa-cis-undecaprenyl diphosphate = [GlcNAc-(1-&gt;4)-Mur2Ac(oyl-L-Ala-gamma-D-Glu-L-Lys-D-Ala-D-Ala)](n+1)-di-trans,octa-cis-undecaprenyl diphosphate + di-trans,octa-cis-undecaprenyl diphosphate + H(+). The protein operates within cell wall biogenesis; peptidoglycan biosynthesis. In terms of biological role, peptidoglycan polymerase that catalyzes glycan chain elongation from lipid-linked precursors. The protein is Biosynthetic peptidoglycan transglycosylase of Pseudomonas syringae pv. tomato (strain ATCC BAA-871 / DC3000).